Consider the following 2057-residue polypeptide: Rho guanine nucleotide exchange factor 17 (2057 aa).

3 disordered regions span residues 20–361, 375–461, and 481–559; these read ERWS…DTGG, LASP…SNPD, and RVRK…LKPS. Phosphoserine occurs at positions 142 and 152. Low complexity predominate over residues 227 to 249; it reads ARASSSSSIASSYPVSRSRAASS. Residues Ser305 and Ser308 each carry the phosphoserine modification. The segment covering 314–323 has biased composition (gly residues); it reads GGLGSAGGVG. Ser324, Ser330, Ser377, Ser381, Ser389, Ser404, and Ser414 each carry phosphoserine. The span at 382–391 shows a compositional bias: polar residues; it reads RGSSRYSSTE. The span at 440–451 shows a compositional bias: basic and acidic residues; the sequence is PLRDGGLDLDKN. Phosphoserine is present on Ser456. The segment covering 507–524 has biased composition (low complexity); that stretch reads EQSESTLSQSPTSPTTRP. 2 positions are modified to phosphoserine: Ser538 and Ser611. Disordered stretches follow at residues 615 to 647 and 663 to 952; these read AGDMTQGHRSQEELSGPESNLTDEGIGADPEPL and LSST…VRHA. The span at 663–672 shows a compositional bias: polar residues; sequence LSSTSAQTNH. At Ser689 the chain carries Phosphoserine. Phosphothreonine occurs at positions 692 and 695. Residues 710 to 719 are compositionally biased toward polar residues; that stretch reads PNGTELSNGE. A Phosphoserine modification is found at Ser728. Residues 747 to 760 are compositionally biased toward polar residues; that stretch reads SVDSNLLGSLNSKT. A compositionally biased stretch (basic and acidic residues) spans 820-829; sequence SLSDPSRRGE. The residue at position 906 (Ser906) is a Phosphoserine. Residues 909-920 show a composition bias toward basic residues; the sequence is LTRRGSKKRPAR. The span at 922 to 931 shows a compositional bias: basic and acidic residues; it reads SHQELRREEG. A compositionally biased stretch (polar residues) spans 933 to 944; the sequence is QDQTGSLTQTRS. A phosphoserine mark is found at Ser953 and Ser994. Residues 1015 to 1027 show a composition bias toward pro residues; that stretch reads GPVDLPCLPPSAP. The disordered stretch occupies residues 1015-1054; sequence GPVDLPCLPPSAPPSTETKPSGAARATPDEPAPASKCCSK. One can recognise a DH domain in the interval 1059–1247; the sequence is MRKHVTMTLL…KQVAERINKG (189 aa). Position 1324 is a phosphoserine (Ser1324). Disordered regions lie at residues 1555-1713 and 1983-2050; these read RCPR…SSRG and CSTP…DSTN. The span at 1579–1589 shows a compositional bias: acidic residues; that stretch reads LDVEATAEEEA. The segment covering 1638-1674 has biased composition (low complexity); sequence SPSPSGTLQSQASQSTISSSFGNEETPSSKEATAETT.

Acts as a guanine nucleotide exchange factor (GEF) for RhoA GTPases. The polypeptide is Rho guanine nucleotide exchange factor 17 (Arhgef17) (Mus musculus (Mouse)).